The primary structure comprises 248 residues: ATP synthase subunit a, chloroplastic (248 aa).

The next 5 membrane-spanning stretches (helical) occupy residues 35–55 (GQVF…SFLG), 94–114 (VPYI…GALI), 133–153 (INTT…AGLS), 202–222 (VFTL…GLFA), and 224–244 (SIQA…AMEG).

Belongs to the ATPase A chain family. As to quaternary structure, F-type ATPases have 2 components, CF(1) - the catalytic core - and CF(0) - the membrane proton channel. CF(1) has five subunits: alpha(3), beta(3), gamma(1), delta(1), epsilon(1). CF(0) has four main subunits: a, b, b' and c.

Its subcellular location is the plastid. It is found in the chloroplast thylakoid membrane. Key component of the proton channel; it plays a direct role in the translocation of protons across the membrane. The chain is ATP synthase subunit a, chloroplastic from Porphyra purpurea (Red seaweed).